A 159-amino-acid polypeptide reads, in one-letter code: MAQKGSERTIRKVVAENRKARFNYEIVDTYEAGLVLTGTEVKSLREGKANISESYATDEGGEIWLINSYLPEYLQANRFNHETRRRRKLLLSKREVNRLQGAVNREGMSLIPLKIYFNDRGRAKLELALGKGKKLHDKRETSKERDWNRQKNRLLKERG.

A disordered region spans residues 134–159 (KLHDKRETSKERDWNRQKNRLLKERG). Residues 137–159 (DKRETSKERDWNRQKNRLLKERG) are compositionally biased toward basic and acidic residues.

Belongs to the SmpB family.

Its subcellular location is the cytoplasm. Its function is as follows. Required for rescue of stalled ribosomes mediated by trans-translation. Binds to transfer-messenger RNA (tmRNA), required for stable association of tmRNA with ribosomes. tmRNA and SmpB together mimic tRNA shape, replacing the anticodon stem-loop with SmpB. tmRNA is encoded by the ssrA gene; the 2 termini fold to resemble tRNA(Ala) and it encodes a 'tag peptide', a short internal open reading frame. During trans-translation Ala-aminoacylated tmRNA acts like a tRNA, entering the A-site of stalled ribosomes, displacing the stalled mRNA. The ribosome then switches to translate the ORF on the tmRNA; the nascent peptide is terminated with the 'tag peptide' encoded by the tmRNA and targeted for degradation. The ribosome is freed to recommence translation, which seems to be the essential function of trans-translation. The protein is SsrA-binding protein of Sinorhizobium fredii (strain NBRC 101917 / NGR234).